The primary structure comprises 235 residues: Probable carboxylesterase Os04g0669600 (235 aa).

Active-site charge relay system residues include Ser113, Asp167, and His199.

Belongs to the AB hydrolase superfamily. AB hydrolase 2 family.

Its function is as follows. Possesses carboxylesterase activity in vitro. This Oryza sativa subsp. japonica (Rice) protein is Probable carboxylesterase Os04g0669600.